The chain runs to 117 residues: Large ribosomal subunit protein bL17 (117 aa).

This sequence belongs to the bacterial ribosomal protein bL17 family. Part of the 50S ribosomal subunit. Contacts protein L32.

The chain is Large ribosomal subunit protein bL17 from Endomicrobium trichonymphae.